The primary structure comprises 482 residues: DNA polymerase II small subunit (482 aa).

Belongs to the DNA polymerase delta/II small subunit family. In terms of assembly, heterodimer of a large subunit and a small subunit.

It carries out the reaction DNA(n) + a 2'-deoxyribonucleoside 5'-triphosphate = DNA(n+1) + diphosphate. It catalyses the reaction Exonucleolytic cleavage in the 3'- to 5'-direction to yield nucleoside 5'-phosphates.. In terms of biological role, possesses two activities: a DNA synthesis (polymerase) and an exonucleolytic activity that degrades single-stranded DNA in the 3' to 5' direction. Has a template-primer preference which is characteristic of a replicative DNA polymerase. The chain is DNA polymerase II small subunit (polB) from Methanothermobacter thermautotrophicus (strain ATCC 29096 / DSM 1053 / JCM 10044 / NBRC 100330 / Delta H) (Methanobacterium thermoautotrophicum).